Consider the following 69-residue polypeptide: MEGISIAKLLVIGALIVLLFGTNKLRSLGGDLGAAIKGFKKAMNDDQPAAKSSAQDEHPAAISETRPKE.

The helical transmembrane segment at 1 to 21 threads the bilayer; it reads MEGISIAKLLVIGALIVLLFG. The tract at residues 45 to 69 is disordered; sequence DDQPAAKSSAQDEHPAAISETRPKE. Basic and acidic residues predominate over residues 54–69; sequence AQDEHPAAISETRPKE.

The protein belongs to the TatA/E family. TatE subfamily.

The protein localises to the cell inner membrane. Its function is as follows. Part of the twin-arginine translocation (Tat) system that transports large folded proteins containing a characteristic twin-arginine motif in their signal peptide across membranes. TatE shares overlapping functions with TatA. The polypeptide is Probable Sec-independent protein translocase protein TatE (Dickeya chrysanthemi (strain Ech1591) (Dickeya zeae (strain Ech1591))).